A 259-amino-acid chain; its full sequence is PLPFSPPSTPVSPPSTPVSPPSTPVSPPSTPVSPPSTPVSPPSTPVSPPSTPVSPPSTPVSPPSTPVSPPSTPVSPPSTPVSPPSTPVSPPSTPVSPPSTPVSPPSSPAPGAVGGVNSSLSQRSTSEHWHASVSVQFERWRDRTPASGLRFAPLAEGWAILTAASCNLHNIRQRPGSSAADRRHCTRSTRSSRRMSRRHRHKGGLRGFVSRCRRSGCCRFSSFASPTIRSKLTGYGVADVGCGVLFVLRHTARRILARS.

Over residues 1 to 108 (PLPFSPPSTP…STPVSPPSSP (108 aa)) the composition is skewed to pro residues. 2 disordered regions span residues 1–127 (PLPF…STSE) and 174–203 (RPGSSAADRRHCTRSTRSSRRMSRRHRHKG). Repeat copies occupy residues 5–11 (SPPSTPV), 12–18 (SPPSTPV), 19–25 (SPPSTPV), 26–32 (SPPSTPV), 33–39 (SPPSTPV), 40–46 (SPPSTPV), 47–53 (SPPSTPV), 54–60 (SPPSTPV), 61–67 (SPPSTPV), 68–74 (SPPSTPV), 75–81 (SPPSTPV), 82–88 (SPPSTPV), 89–95 (SPPSTPV), 96–102 (SPPSTPV), and 103–109 (SPPSSPA). The 15 X 7 AA repeats of S-P-P-S-T-P-V stretch occupies residues 5–109 (SPPSTPVSPP…TPVSPPSSPA (105 aa)). The span at 184–203 (HCTRSTRSSRRMSRRHRHKG) shows a compositional bias: basic residues.

The sequence is that of Merozoite surface protein CMZ-8 from Eimeria acervulina (Coccidian parasite).